The sequence spans 225 residues: Ribosome maturation factor RimM (225 aa).

Positions 144–225 (ADEFYWVDLI…RIVVDWEADY (82 aa)) constitute a PRC barrel domain.

This sequence belongs to the RimM family. In terms of assembly, binds ribosomal protein uS19.

It localises to the cytoplasm. Its function is as follows. An accessory protein needed during the final step in the assembly of 30S ribosomal subunit, possibly for assembly of the head region. Essential for efficient processing of 16S rRNA. May be needed both before and after RbfA during the maturation of 16S rRNA. It has affinity for free ribosomal 30S subunits but not for 70S ribosomes. This is Ribosome maturation factor RimM from Burkholderia orbicola (strain AU 1054).